The following is a 264-amino-acid chain: uncharacterized protein (264 aa).

6 helical membrane-spanning segments follow: residues 1–21, 43–63, 95–115, 146–166, 181–201, and 215–235; these read MLLG…SVSL, FFGV…NGFV, VVGL…LSSL, IATW…LGGL, GWLA…QPFV, and IVAN…MFFP.

This sequence to M.pneumoniae MPN_308 C-terminal region.

The protein localises to the cell membrane. This is an uncharacterized protein from Mycoplasma pneumoniae (strain ATCC 29342 / M129 / Subtype 1) (Mycoplasmoides pneumoniae).